Here is a 381-residue protein sequence, read N- to C-terminus: Diguanylate cyclase DosC (381 aa).

His98 contributes to the heme binding site. The region spanning 325–381 is the GGDEF domain; it reads TPLSVLIIDVDKFKEINDTWGHNTGDEILRKVSFLSQKRLVKSKILGAGSSRKLAVS. Asp333 is a binding site for Mg(2+). Substrate contacts are provided by Asn341 and Asp350.

Heme is required as a cofactor. The cofactor is Mg(2+).

It catalyses the reaction 2 GTP = 3',3'-c-di-GMP + 2 diphosphate. The protein operates within purine metabolism; 3',5'-cyclic di-GMP biosynthesis. Functionally, globin-coupled heme-based oxygen sensor protein displaying diguanylate cyclase (DGC) activity in response to oxygen availability. Thus, catalyzes the synthesis of cyclic diguanylate (c-di-GMP) via the condensation of 2 GTP molecules. Cyclic-di-GMP is a second messenger which controls cell surface-associated traits in bacteria. In Shigella flexneri, this protein is Diguanylate cyclase DosC (dosC).